Reading from the N-terminus, the 381-residue chain is Protein kinase gsk31 (381 aa).

The Protein kinase domain occupies 25–309 (YEPCRVLGSG…AIEVLTHPFF (285 aa)). Residues 31-39 (LGSGSFGVV) and K54 contribute to the ATP site. The active-site Proton acceptor is D150. S184 bears the Phosphoserine mark. Y185 carries the phosphotyrosine modification.

Belongs to the protein kinase superfamily. CMGC Ser/Thr protein kinase family. GSK-3 subfamily.

The catalysed reaction is L-seryl-[protein] + ATP = O-phospho-L-seryl-[protein] + ADP + H(+). The enzyme catalyses L-threonyl-[protein] + ATP = O-phospho-L-threonyl-[protein] + ADP + H(+). The sequence is that of Protein kinase gsk31 (gsk31) from Schizosaccharomyces pombe (strain 972 / ATCC 24843) (Fission yeast).